We begin with the raw amino-acid sequence, 255 residues long: 5'-nucleotidase SurE (255 aa).

Residues aspartate 8, aspartate 9, serine 40, and asparagine 93 each coordinate a divalent metal cation.

It belongs to the SurE nucleotidase family. The cofactor is a divalent metal cation.

It is found in the cytoplasm. It carries out the reaction a ribonucleoside 5'-phosphate + H2O = a ribonucleoside + phosphate. In terms of biological role, nucleotidase that shows phosphatase activity on nucleoside 5'-monophosphates. The protein is 5'-nucleotidase SurE of Azorhizobium caulinodans (strain ATCC 43989 / DSM 5975 / JCM 20966 / LMG 6465 / NBRC 14845 / NCIMB 13405 / ORS 571).